Here is a 149-residue protein sequence, read N- to C-terminus: Transcriptional repressor NrdR (149 aa).

A zinc finger spans residues 3–34; sequence CPFCSHPETQVVETRVAEDGDFVRRRRQCGAC. The ATP-cone domain occupies 49-139; that stretch reads PNVVKKDGRR…VYRNFEDIDE (91 aa).

The protein belongs to the NrdR family. Zn(2+) serves as cofactor.

In terms of biological role, negatively regulates transcription of bacterial ribonucleotide reductase nrd genes and operons by binding to NrdR-boxes. The polypeptide is Transcriptional repressor NrdR (Paracidovorax citrulli (strain AAC00-1) (Acidovorax citrulli)).